The chain runs to 66 residues: Phylloseptin-S4 (66 aa).

The N-terminal stretch at 1–22 (MAFLKKSLFLVLFLGLVSLSIC) is a signal peptide. The propeptide occupies 23–46 (EEEKRETEEEEHDQEEDDKSEEKR). The tract at residues 25–44 (EKRETEEEEHDQEEDDKSEE) is disordered. The span at 30–41 (EEEEHDQEEDDK) shows a compositional bias: acidic residues. Leu-65 is subject to Leucine amide.

Expressed by the skin glands.

It localises to the secreted. Its subcellular location is the target cell membrane. Its function is as follows. Antimicrobial peptide with high activity against Gram-positive bacteria, moderate activity against Gram-negative bacteria, and moderate activity against fungi. Acts by causing bacterial membrane disruption inducing leakage of the intracellular content followed by cell death. It adopts an alpha-helical amphipathic structure in membrane environments. Also shows highly potent antiparasitic activity against Leishmania species. Shows moderate hemolytic activity on human erythrocytes (LC(50)=33 uM). Is also active on human monocytes (IC(50)=23 uM). In Phyllomedusa sauvagei (Sauvage's leaf frog), this protein is Phylloseptin-S4.